The following is a 482-amino-acid chain: Bile acid receptor (482 aa).

A Glycyl lysine isopeptide (Lys-Gly) (interchain with G-Cter in SUMO1) cross-link involves residue K132. Residues 134–209 (DELCVVCGDR…MGMLAECLLT (76 aa)) constitute a DNA-binding region (nuclear receptor). Residues 137 to 157 (CVVCGDRASGYHYNALTCEGC) form an NR C4-type zinc finger. Phosphoserine; by PKC/PRKCA occurs at positions 145 and 164. K167 carries the N6-acetyllysine; by EP300 modification. The NR C4-type zinc-finger motif lies at 173 to 197 (CKNGGNCVMDMYMRRKCQECRLRKC). N6-methyllysine; by SETD7 is present on K216. The residue at position 223 (K223) is an N6-acetyllysine; by EP300. The segment covering 229–240 (AIHEDSEGRDLR) has biased composition (basic and acidic residues). The disordered stretch occupies residues 229-253 (AIHEDSEGRDLRQVTSTTKSCREKT). The NR LBD domain occupies 258–482 (DQQNLLHYIM…PLLCEIWDVQ (225 aa)). K285 is covalently cross-linked (Glycyl lysine isopeptide (Lys-Gly) (interchain with G-Cter in SUMO1)). Chenodeoxycholate contacts are provided by R341, Y371, and Y379. The residue at position 452 (T452) is a Phosphothreonine; by PKC/PRKCZ. H457 lines the chenodeoxycholate pocket.

It belongs to the nuclear hormone receptor family. NR1 subfamily. As to quaternary structure, heterodimer with RXRA; the heterodimerization enhances the binding affinity for LXXLL motifs from coactivators. Binds DNA predominantly as a heterodimer with RXRA. After activation by agonist binding interacts with coactivators. Interacts with NCOA1, NCOA2, PPARGC1A, CARM1, SETD7, PRMT1, GPS2, SMARCA4 and MED1, EP300 and SMARCD1. Interacts with XRCC5 and XRCC6; decreasing NR1H4/FXR transactivation activity towards ABCB11/BSEP. Interacts with PAGR1 AND NCOA6; indicative for an association with an MLL2/MLL3 complex (ASCOM). Acetylated by EP300. Lys-223 as is the major acetylation site for EP300; the dynamicly regulated acetylation inhibits heterodimerization with RXRA and transactivation activity. Deacetylated by SIRT1. Post-translationally, methylation may increase transactivation of target genes. In terms of processing, phosphorylation by PKC/PRKCA increases transactivation activity by promoting association with PPARGC1A. Sumoylated upon ligand binding.

The protein localises to the nucleus. Functionally, ligand-activated transcription factor. Receptor for bile acids (BAs) such as chenodeoxycholic acid (CDCA), lithocholic acid, deoxycholic acid (DCA) and allocholic acid (ACA). Plays a essential role in BA homeostasis through the regulation of genes involved in BA synthesis, conjugation and enterohepatic circulation. Also regulates lipid and glucose homeostasis and is involved innate immune response. The FXR-RXR heterodimer binds predominantly to farnesoid X receptor response elements (FXREs) containing two inverted repeats of the consensus sequence 5'-AGGTCA-3' in which the monomers are spaced by 1 nucleotide (IR-1) but also to tandem repeat DR1 sites with lower affinity, and can be activated by either FXR or RXR-specific ligands. It is proposed that monomeric nuclear receptors such as NR5A2/LRH-1 bound to coregulatory nuclear responsive element (NRE) halfsites located in close proximity to FXREs modulate transcriptional activity. In the liver activates transcription of the corepressor NR0B2 thereby indirectly inhibiting CYP7A1 and CYP8B1 (involved in BA synthesis) implicating at least in part histone demethylase KDM1A resulting in epigenomic repression, and SLC10A1/NTCP (involved in hepatic uptake of conjugated BAs). Activates transcription of the repressor MAFG (involved in regulation of BA synthesis). Activates transcription of SLC27A5/BACS and BAAT (involved in BA conjugation), ABCB11/BSEP (involved in bile salt export) by directly recruiting histone methyltransferase CARM1, and ABCC2/MRP2 (involved in secretion of conjugated BAs) and ABCB4 (involved in secretion of phosphatidylcholine in the small intestine). Activates transcription of SLC27A5/BACS and BAAT (involved in BA conjugation), ABCB11/BSEP (involved in bile salt export) by directly recruiting histone methyltransferase CARM1, and ABCC2/MRP2 (involved in secretion of conjugated BAs) and ABCB4 (involved in secretion of phosphatidylcholine in the small intestine). In the intestine activates FGF19 expression and secretion leading to hepatic CYP7A1 repression. The function also involves the coordinated induction of hepatic KLB/beta-klotho expression. Regulates transcription of liver UGT2B4 and SULT2A1 involved in BA detoxification; binding to the UGT2B4 promoter seems to imply a monomeric transactivation independent of RXRA. Modulates lipid homeostasis by activating liver NR0B2/SHP-mediated repression of SREBF1 (involved in de novo lipogenesis), expression of PLTP (involved in HDL formation), SCARB1 (involved in HDL hepatic uptake), APOE, APOC1, APOC4, PPARA (involved in beta-oxidation of fatty acids), VLDLR and SDC1 (involved in the hepatic uptake of LDL and IDL remnants), and inhibiting expression of MTTP (involved in VLDL assembly). Increases expression of APOC2 (promoting lipoprotein lipase activity implicated in triglyceride clearance). Transrepresses APOA1 involving a monomeric competition with NR2A1 for binding to a DR1 element. Also reduces triglyceride clearance by inhibiting expression of ANGPTL3 and APOC3 (both involved in inhibition of lipoprotein lipase). Involved in glucose homeostasis by modulating hepatic gluconeogenesis through activation of NR0B2/SHP-mediated repression of respective genes. Modulates glycogen synthesis (inducing phosphorylation of glycogen synthase kinase-3). Modulates glucose-stimulated insulin secretion and is involved in insulin resistance. Involved in intestinal innate immunity. Plays a role in protecting the distal small intestine against bacterial overgrowth and preservation of the epithelial barrier. Down-regulates inflammatory cytokine expression in several types of immune cells including macrophages and mononuclear cells. Mediates trans-repression of TLR4-induced cytokine expression; the function seems to require its sumoylation and prevents N-CoR nuclear receptor corepressor clearance from target genes such as IL1B and NOS2. Involved in the TLR9-mediated protective mechanism in intestinal inflammation. Plays an anti-inflammatory role in liver inflammation; proposed to inhibit pro-inflammatory (but not antiapoptotic) NF-kappa-B signaling. This chain is Bile acid receptor (NR1H4), found in Bos taurus (Bovine).